Reading from the N-terminus, the 387-residue chain is Carbamoyl phosphate synthase small chain (387 aa).

Positions Met-1–Phe-196 are CPSase. The L-glutamine site is built by Ser-51, Gly-245, and Gly-247. The region spanning His-197–Thr-384 is the Glutamine amidotransferase type-1 domain. Cys-273 functions as the Nucleophile in the catalytic mechanism. Positions 274, 277, 315, and 318 each coordinate L-glutamine. Active-site residues include His-357 and Glu-359.

This sequence belongs to the CarA family. Composed of two chains; the small (or glutamine) chain promotes the hydrolysis of glutamine to ammonia, which is used by the large (or ammonia) chain to synthesize carbamoyl phosphate. Tetramer of heterodimers (alpha,beta)4.

The enzyme catalyses hydrogencarbonate + L-glutamine + 2 ATP + H2O = carbamoyl phosphate + L-glutamate + 2 ADP + phosphate + 2 H(+). The catalysed reaction is L-glutamine + H2O = L-glutamate + NH4(+). Its pathway is amino-acid biosynthesis; L-arginine biosynthesis; carbamoyl phosphate from bicarbonate: step 1/1. It functions in the pathway pyrimidine metabolism; UMP biosynthesis via de novo pathway; (S)-dihydroorotate from bicarbonate: step 1/3. Small subunit of the glutamine-dependent carbamoyl phosphate synthetase (CPSase). CPSase catalyzes the formation of carbamoyl phosphate from the ammonia moiety of glutamine, carbonate, and phosphate donated by ATP, constituting the first step of 2 biosynthetic pathways, one leading to arginine and/or urea and the other to pyrimidine nucleotides. The small subunit (glutamine amidotransferase) binds and cleaves glutamine to supply the large subunit with the substrate ammonia. This chain is Carbamoyl phosphate synthase small chain, found in Buchnera aphidicola subsp. Acyrthosiphon pisum (strain APS) (Acyrthosiphon pisum symbiotic bacterium).